The sequence spans 500 residues: Glutamyl-tRNA(Gln) amidotransferase subunit A (500 aa).

Residues Lys93 and Ser168 each act as charge relay system in the active site. Residue Ser192 is the Acyl-ester intermediate of the active site.

This sequence belongs to the amidase family. GatA subfamily. Heterotrimer of A, B and C subunits.

It carries out the reaction L-glutamyl-tRNA(Gln) + L-glutamine + ATP + H2O = L-glutaminyl-tRNA(Gln) + L-glutamate + ADP + phosphate + H(+). Functionally, allows the formation of correctly charged Gln-tRNA(Gln) through the transamidation of misacylated Glu-tRNA(Gln) in organisms which lack glutaminyl-tRNA synthetase. The reaction takes place in the presence of glutamine and ATP through an activated gamma-phospho-Glu-tRNA(Gln). In Corynebacterium jeikeium (strain K411), this protein is Glutamyl-tRNA(Gln) amidotransferase subunit A.